A 121-amino-acid polypeptide reads, in one-letter code: Large ribosomal subunit protein uL22 (121 aa).

Belongs to the universal ribosomal protein uL22 family. Part of the 50S ribosomal subunit.

Functionally, this protein binds specifically to 23S rRNA; its binding is stimulated by other ribosomal proteins, e.g. L4, L17, and L20. It is important during the early stages of 50S assembly. It makes multiple contacts with different domains of the 23S rRNA in the assembled 50S subunit and ribosome. In terms of biological role, the globular domain of the protein is located near the polypeptide exit tunnel on the outside of the subunit, while an extended beta-hairpin is found that lines the wall of the exit tunnel in the center of the 70S ribosome. In Micrococcus luteus (strain ATCC 4698 / DSM 20030 / JCM 1464 / CCM 169 / CCUG 5858 / IAM 1056 / NBRC 3333 / NCIMB 9278 / NCTC 2665 / VKM Ac-2230) (Micrococcus lysodeikticus), this protein is Large ribosomal subunit protein uL22.